The following is a 60-amino-acid chain: Ribosome biogenesis protein Nop10 (60 aa).

Residues 29–60 (CDGPTENSAPAPFSPEDPYGEYRRRVRRRASE) form a disordered region.

The protein belongs to the NOP10 family.

Its function is as follows. Involved in ribosome biogenesis; more specifically in 18S rRNA pseudouridylation and in cleavage of pre-rRNA. The sequence is that of Ribosome biogenesis protein Nop10 from Halorubrum lacusprofundi (strain ATCC 49239 / DSM 5036 / JCM 8891 / ACAM 34).